The following is a 220-amino-acid chain: Dual specificity protein phosphatase 19 (220 aa).

Met1 bears the N-acetylmethionine mark. The Tyrosine-protein phosphatase domain maps to 64–205; that stretch reads QVGVIKPWLL…LRTYQVGKES (142 aa). The Phosphocysteine intermediate role is filled by Cys149.

The protein belongs to the protein-tyrosine phosphatase family. Non-receptor class dual specificity subfamily.

The catalysed reaction is O-phospho-L-tyrosyl-[protein] + H2O = L-tyrosyl-[protein] + phosphate. It catalyses the reaction O-phospho-L-seryl-[protein] + H2O = L-seryl-[protein] + phosphate. The enzyme catalyses O-phospho-L-threonyl-[protein] + H2O = L-threonyl-[protein] + phosphate. Its activity is regulated as follows. Phosphatase activity is enhanced by Ca(2+) and Mn(2+). Its function is as follows. Has a dual specificity toward Ser/Thr and Tyr-containing proteins. The protein is Dual specificity protein phosphatase 19 of Mus musculus (Mouse).